The sequence spans 239 residues: MEFDPAKINTSSIDHVTILQYIDEPNDIRLTVCIIRNINNITYYINITKINTHLANQFRAWKKRIAGRDYITNLSRDTGIQQSKLTETIRNCQKNRNIYGLYIHYNLVINVVIDWITDVIVQSILRGLVNWYIANNTYTPNNTTTISELDIIKILDKYEDVYRVSKEKECGICYEVVYSKRLENDRYFGLLDSCNHIFCITCINIWHKTRRETGASDNCPICRTRFRNITMSKFYKLVN.

One can recognise a KilA-N domain in the interval 21–131 (YIDEPNDIRL…QSILRGLVNW (111 aa)). The RING-type zinc finger occupies 170–223 (CGICYEVVYSKRLENDRYFGLLDSCNHIFCITCINIWHKTRRETGASDNCPICR).

This sequence belongs to the orthopoxvirus OPG021 family.

The protein resides in the host cytoplasm. RING-finger E3 ubiquitin ligase which catalyzes the formation of both 'Lys-48'- and 'Lys-63'-linked polyubiquitin chains. Plays an important role in virulence by acting as an anti-apoptotic factor. This chain is Host range factor p28 (OPG021), found in Homo sapiens (Human).